We begin with the raw amino-acid sequence, 719 residues long: Solute carrier family 15 member 2 (719 aa).

Residues 1-43 (MGKMKDKDVDAEKYEKAQRSPKLCGTNYPVSIAFIVVNEFCER) lie on the Cytoplasmic side of the membrane. The chain crosses the membrane as a helical span at residues 44–61 (FSYYGMKAVLTLYFMNYL). Residues 62–69 (HWDKNLST) are Extracellular-facing. Asn66 is a glycosylation site (N-linked (GlcNAc...) asparagine). Residues 70 to 90 (AIYHAFSGLCYFTPLLGALIA) traverse the membrane as a helical segment. The Cytoplasmic segment spans residues 91-99 (DSWLGKFKT). Residues 100–120 (IIYLSIVYVIGHVVKSVGAIP) form a helical membrane-spanning segment. Topologically, residues 121–125 (DVGDS) are extracellular. A helical membrane pass occupies residues 126–146 (TVHIALSMVGLGLIALGTGGI). Over 147–169 (KPCVAAFGGDQFDEDNIDERRKF) the chain is Cytoplasmic. A helical transmembrane segment spans residues 170–190 (FSIFYMSINAGSVLSTIITPI). The Extracellular segment spans residues 191-201 (LRGDVQCFGGD). Residues 202–222 (CYALAFGVPAALMVIALVVFI) form a helical membrane-spanning segment. Residues 223-280 (SGSGLYKKSPPEGNVLVRVCKCIGFAISNRWTNSKKSPKRSHWLDWAEEKYSKRLIQE) are Cytoplasmic-facing. A helical membrane pass occupies residues 281-301 (IKMVCRVLVLYIPLPMFWALF). Residues 302–334 (DQQGSRWTLQATRMNMDFGGGFIIKPDQMQMLN) are Extracellular-facing. The chain crosses the membrane as a helical span at residues 335 to 355 (ALLILVFIPIFDMGIYPLVGL). At 356-367 (CRIKLTPLKKMA) the chain is on the cytoplasmic side. Residues 368–388 (TGMILAALAFCAATAVEVYVI) form a helical membrane-spanning segment. Residues 389-594 (KTVVEPPPAK…QANNIHIGWQ (206 aa)) lie on the Extracellular side of the membrane. An extracellular domain (ECD) region spans residues 389-594 (KTVVEPPPAK…QANNIHIGWQ (206 aa)). Asn481, Asn513, and Asn532 each carry an N-linked (GlcNAc...) asparagine glycan. The helical transmembrane segment at 595 to 615 (IPQYVFLTAGEVMFSITGLEF) threads the bilayer. The Cytoplasmic segment spans residues 616–626 (SYSQAPASMKS). The helical transmembrane segment at 627–647 (VLQAGWLMTVAFGNVIVLIVA) threads the bilayer. Over 648–657 (EGAGMEQWVE) the chain is Extracellular. The helical transmembrane segment at 658 to 678 (FLLFAALLVAVSIIFSIMAYF) threads the bilayer. The Cytoplasmic segment spans residues 679 to 719 (YTYVDPDQLDKLFKEDGDGGKVESSKKDELSLGDMPKQTKM). Residues 695–708 (GDGGKVESSKKDEL) are compositionally biased toward basic and acidic residues. The interval 695–719 (GDGGKVESSKKDELSLGDMPKQTKM) is disordered.

It belongs to the major facilitator superfamily. Proton-dependent oligopeptide transporter (POT/PTR) (TC 2.A.17) family. In terms of tissue distribution, expressed in kidney, brain and gut. Also expressed weakly in eye, gill and skeletal muscle.

Its subcellular location is the apical cell membrane. The protein localises to the cytoplasmic vesicle. The protein resides in the phagosome membrane. It is found in the cell membrane. It catalyses the reaction a dipeptide(out) + 2 H(+)(out) = a dipeptide(in) + 2 H(+)(in). It carries out the reaction N-acetyl-D-muramoyl-L-alanyl-D-isoglutamine(out) + 3 H(+)(out) = N-acetyl-D-muramoyl-L-alanyl-D-isoglutamine(in) + 3 H(+)(in). The catalysed reaction is glycyl-L-leucine(out) + 2 H(+)(out) = glycyl-L-leucine(in) + 2 H(+)(in). The enzyme catalyses glycyl-L-lysine(out) + 2 H(+)(out) = glycyl-L-lysine(in) + 2 H(+)(in). It catalyses the reaction glycyl-L-glutamate(out) + 3 H(+)(out) = glycyl-L-glutamate(in) + 3 H(+)(in). It carries out the reaction L-alanyl-L-alanine(out) + 2 H(+)(out) = L-alanyl-L-alanine(in) + 2 H(+)(in). The catalysed reaction is an L-amino acid tripeptide(out) + 2 H(+)(out) = an L-amino acid tripeptide(in) + 2 H(+)(in). The enzyme catalyses carnosine(out) + 2 H(+)(out) = carnosine(in) + 2 H(+)(in). In terms of biological role, proton-coupled amino-acid transporter that transports oligopeptides of 2 to 4 amino acids with a preference for dipeptides. Transports neutral and anionic dipeptides with a proton to peptide stoichiometry of 2:1 or 3:1. This chain is Solute carrier family 15 member 2, found in Danio rerio (Zebrafish).